The sequence spans 617 residues: Proline--tRNA ligase (617 aa).

Belongs to the class-II aminoacyl-tRNA synthetase family. ProS type 1 subfamily. As to quaternary structure, homodimer.

The protein resides in the cytoplasm. It carries out the reaction tRNA(Pro) + L-proline + ATP = L-prolyl-tRNA(Pro) + AMP + diphosphate. Its function is as follows. Catalyzes the attachment of proline to tRNA(Pro) in a two-step reaction: proline is first activated by ATP to form Pro-AMP and then transferred to the acceptor end of tRNA(Pro). As ProRS can inadvertently accommodate and process non-cognate amino acids such as alanine and cysteine, to avoid such errors it has two additional distinct editing activities against alanine. One activity is designated as 'pretransfer' editing and involves the tRNA(Pro)-independent hydrolysis of activated Ala-AMP. The other activity is designated 'posttransfer' editing and involves deacylation of mischarged Ala-tRNA(Pro). The misacylated Cys-tRNA(Pro) is not edited by ProRS. In Streptococcus pneumoniae serotype 19F (strain G54), this protein is Proline--tRNA ligase.